A 155-amino-acid chain; its full sequence is Large ribosomal subunit protein uL13 (155 aa).

Belongs to the universal ribosomal protein uL13 family. In terms of assembly, part of the 50S ribosomal subunit.

This protein is one of the early assembly proteins of the 50S ribosomal subunit, although it is not seen to bind rRNA by itself. It is important during the early stages of 50S assembly. In Rickettsia typhi (strain ATCC VR-144 / Wilmington), this protein is Large ribosomal subunit protein uL13.